Reading from the N-terminus, the 113-residue chain is N(2)-fixation sustaining protein CowN (113 aa).

This sequence belongs to the CowN family.

Its function is as follows. Is required to sustain N(2)-dependent growth in the presence of low levels of carbon monoxide (CO). Probably acts by protecting the N(2) fixation ability of the nitrogenase complex, which is inactivated in the presence of CO. The protein is N(2)-fixation sustaining protein CowN of Azoarcus sp. (strain BH72).